The chain runs to 299 residues: 33 kDa chaperonin (299 aa).

2 disulfides stabilise this stretch: C240–C242 and C273–C276.

Belongs to the HSP33 family. Under oxidizing conditions two disulfide bonds are formed involving the reactive cysteines. Under reducing conditions zinc is bound to the reactive cysteines and the protein is inactive.

The protein localises to the cytoplasm. Functionally, redox regulated molecular chaperone. Protects both thermally unfolding and oxidatively damaged proteins from irreversible aggregation. Plays an important role in the bacterial defense system toward oxidative stress. This chain is 33 kDa chaperonin, found in Gloeothece citriformis (strain PCC 7424) (Cyanothece sp. (strain PCC 7424)).